The sequence spans 439 residues: C4-dicarboxylate transport protein (439 aa).

The next 9 helical transmembrane spans lie at 9-29 (HLYF…YYLP), 45-65 (MIKM…IAGM), 80-100 (LYFE…INII), 150-170 (GEIL…SAMG), 186-206 (AFFG…FGAM), 221-241 (LGML…VVLG), 291-311 (VVGL…SIYL), 334-354 (ILGV…SGFV), and 357-377 (AATF…ILGI).

The protein belongs to the dicarboxylate/amino acid:cation symporter (DAACS) (TC 2.A.23) family.

It localises to the cell inner membrane. In terms of biological role, responsible for the transport of dicarboxylates such as succinate, fumarate, and malate from the periplasm across the membrane. This Geobacter sp. (strain M21) protein is C4-dicarboxylate transport protein.